The following is a 194-amino-acid chain: Large ribosomal subunit protein bL25B (194 aa).

This sequence belongs to the bacterial ribosomal protein bL25 family. CTC subfamily. Part of the 50S ribosomal subunit; part of the 5S rRNA/L5/L18/L25 subcomplex. Contacts the 5S rRNA. Binds to the 5S rRNA independently of L5 and L18.

Its function is as follows. This is one of the proteins that binds to the 5S RNA in the ribosome where it forms part of the central protuberance. The protein is Large ribosomal subunit protein bL25B of Symbiobacterium thermophilum (strain DSM 24528 / JCM 14929 / IAM 14863 / T).